The following is a 380-amino-acid chain: cAMP-dependent protein kinase type I-alpha regulatory subunit (380 aa).

An N-acetylmethionine modification is found at M1. At A2 the chain carries N-acetylalanine; in cAMP-dependent protein kinase type I-alpha regulatory subunit, N-terminally processed. A dimerization and phosphorylation region spans residues 2 to 135; it reads ASGSTASEEE…ALAKAIEKNV (134 aa). Phosphoserine occurs at positions 3, 76, and 82. Positions 64-96 are disordered; that stretch reads IQNLQKASARADSREDEISPPPPNPVVKGRRRR. Positions 95 to 99 match the Pseudophosphorylation motif motif; sequence RRGAI. Position 100 is a phosphoserine (S100). Residues 136–253, E201, R210, 254–380, E325, and R334 each bind 3',5'-cyclic AMP; these read LFSH…SKVS and ILES…SLSV. S257 carries the post-translational modification Phosphoserine.

Belongs to the cAMP-dependent kinase regulatory chain family. The inactive holoenzyme is composed of two regulatory chains and two catalytic chains. Activation by cAMP releases the two active catalytic monomers and the regulatory dimer. Interacts with PRKACA and PRKACB. PRKAR1A also interacts with RFC2; the complex may be involved in cell survival. Interacts with AKAP4. Interacts with RARA; the interaction occurs in the presence of cAMP or FSH and regulates RARA transcriptional activity. Interacts with the phosphorylated form of PJA2. Interacts with CBFA2T3. Interacts with PRKX; regulates this cAMP-dependent protein kinase. Interacts with smAKAP; this interaction may target PRKAR1A to the plasma membrane. Interacts with AICDA. Post-translationally, the pseudophosphorylation site binds to the substrate-binding region of the catalytic chain, resulting in the inhibition of its activity. As to expression, four types of regulatory chains are found: I-alpha, I-beta, II-alpha, and II-beta. Their expression varies among tissues and is in some cases constitutive and in others inducible.

The protein localises to the cell membrane. Functionally, regulatory subunit of the cAMP-dependent protein kinases involved in cAMP signaling in cells. This is cAMP-dependent protein kinase type I-alpha regulatory subunit (PRKAR1A) from Sus scrofa (Pig).